A 131-amino-acid polypeptide reads, in one-letter code: Small ribosomal subunit protein uS8 (131 aa).

The protein belongs to the universal ribosomal protein uS8 family. As to quaternary structure, part of the 30S ribosomal subunit. Contacts proteins S5 and S12.

Its function is as follows. One of the primary rRNA binding proteins, it binds directly to 16S rRNA central domain where it helps coordinate assembly of the platform of the 30S subunit. This Burkholderia lata (strain ATCC 17760 / DSM 23089 / LMG 22485 / NCIMB 9086 / R18194 / 383) protein is Small ribosomal subunit protein uS8.